The sequence spans 471 residues: V-type ATP synthase beta chain (471 aa).

It belongs to the ATPase alpha/beta chains family.

In terms of biological role, produces ATP from ADP in the presence of a proton gradient across the membrane. The V-type beta chain is a regulatory subunit. This chain is V-type ATP synthase beta chain, found in Streptococcus pyogenes serotype M28 (strain MGAS6180).